A 480-amino-acid chain; its full sequence is Glutamyl-tRNA(Gln) amidotransferase subunit A (480 aa).

Catalysis depends on charge relay system residues K70 and S145. The active-site Acyl-ester intermediate is the S169.

This sequence belongs to the amidase family. GatA subfamily. Heterotrimer of A, B and C subunits.

It carries out the reaction L-glutamyl-tRNA(Gln) + L-glutamine + ATP + H2O = L-glutaminyl-tRNA(Gln) + L-glutamate + ADP + phosphate + H(+). Allows the formation of correctly charged Gln-tRNA(Gln) through the transamidation of misacylated Glu-tRNA(Gln) in organisms which lack glutaminyl-tRNA synthetase. The reaction takes place in the presence of glutamine and ATP through an activated gamma-phospho-Glu-tRNA(Gln). The chain is Glutamyl-tRNA(Gln) amidotransferase subunit A from Lactobacillus delbrueckii subsp. bulgaricus (strain ATCC BAA-365 / Lb-18).